Reading from the N-terminus, the 236-residue chain is Geranylgeranylglyceryl phosphate synthase (236 aa).

Position 13 (lysine 13) interacts with sn-glycerol 1-phosphate. Positions 15 and 42 each coordinate Mg(2+). Residues 161-166 (YVEYSG), glycine 191, and 211-212 (GD) each bind sn-glycerol 1-phosphate.

Belongs to the GGGP/HepGP synthase family. Group I subfamily. Mg(2+) is required as a cofactor.

The protein localises to the cytoplasm. The enzyme catalyses sn-glycerol 1-phosphate + (2E,6E,10E)-geranylgeranyl diphosphate = sn-3-O-(geranylgeranyl)glycerol 1-phosphate + diphosphate. The protein operates within membrane lipid metabolism; glycerophospholipid metabolism. Prenyltransferase that catalyzes the transfer of the geranylgeranyl moiety of geranylgeranyl diphosphate (GGPP) to the C3 hydroxyl of sn-glycerol-1-phosphate (G1P). This reaction is the first ether-bond-formation step in the biosynthesis of archaeal membrane lipids. The protein is Geranylgeranylglyceryl phosphate synthase of Halobacterium salinarum (strain ATCC 700922 / JCM 11081 / NRC-1) (Halobacterium halobium).